A 214-amino-acid chain; its full sequence is UPF0301 protein NFA_55110 (214 aa).

Positions 1–24 (MARADDPDERKTQGGHGDRRRREF) are disordered.

It belongs to the UPF0301 (AlgH) family.

In Nocardia farcinica (strain IFM 10152), this protein is UPF0301 protein NFA_55110.